A 208-amino-acid chain; its full sequence is Methylthioribulose-1-phosphate dehydratase (208 aa).

Histidine 98 and histidine 100 together coordinate Zn(2+).

It belongs to the aldolase class II family. MtnB subfamily. It depends on Zn(2+) as a cofactor.

It carries out the reaction 5-(methylsulfanyl)-D-ribulose 1-phosphate = 5-methylsulfanyl-2,3-dioxopentyl phosphate + H2O. Its pathway is amino-acid biosynthesis; L-methionine biosynthesis via salvage pathway; L-methionine from S-methyl-5-thio-alpha-D-ribose 1-phosphate: step 2/6. In terms of biological role, catalyzes the dehydration of methylthioribulose-1-phosphate (MTRu-1-P) into 2,3-diketo-5-methylthiopentyl-1-phosphate (DK-MTP-1-P). In Marinobacter nauticus (strain ATCC 700491 / DSM 11845 / VT8) (Marinobacter aquaeolei), this protein is Methylthioribulose-1-phosphate dehydratase.